A 117-amino-acid chain; its full sequence is EIVSLSLSLLAVVPLVVLVIAGPLNVRGGTPSQQCNTGTPQCCQQVQQTSDLQQFRSSFGLVDALAGASALVGANCNPVSVLGTGNGAQCNTQPVCCTSNQMLGAVNMGCMPLNVNA.

The N-terminal stretch at 1 to 21 (EIVSLSLSLLAVVPLVVLVIA) is a signal peptide. 4 cysteine pairs are disulfide-bonded: Cys-35-Cys-96, Cys-42-Cys-90, Cys-43-Cys-76, and Cys-97-Cys-110.

Belongs to the fungal hydrophobin family. As to quaternary structure, self-assembles to form functional amyloid fibrils called rodlets. Self-assembly into fibrillar rodlets occurs spontaneously at hydrophobic:hydrophilic interfaces and the rodlets further associate laterally to form amphipathic monolayers.

It localises to the secreted. It is found in the cell wall. In terms of biological role, aerial growth, conidiation, and dispersal of filamentous fungi in the environment rely upon a capability of their secreting small amphipathic proteins called hydrophobins (HPBs) with low sequence identity. Class I can self-assemble into an outermost layer of rodlet bundles on aerial cell surfaces, conferring cellular hydrophobicity that supports fungal growth, development and dispersal; whereas Class II form highly ordered films at water-air interfaces through intermolecular interactions but contribute nothing to the rodlet structure. In Pisolithus tinctorius (Dead man's foot), this protein is Class I hydrophobin 2.